We begin with the raw amino-acid sequence, 155 residues long: Fibroblast growth factor 1 (155 aa).

The residue at position 2 (alanine 2) is an N-acetylalanine. A propeptide spanning residues 2 to 15 (AEGEITTFSALTER) is cleaved from the precursor. Heparin is bound at residue asparagine 33. The interval 127–143 (KKNGSCKRGPRTHYGQK) is heparin-binding.

This sequence belongs to the heparin-binding growth factors family. As to quaternary structure, monomer. Homodimer. Interacts with FGFR1, FGFR2, FGFR3 and FGFR4. Affinity between fibroblast growth factors (FGFs) and their receptors is increased by heparan sulfate glycosaminoglycans that function as coreceptors. Found in a complex with FGFBP1, FGF1 and FGF2. Interacts with FGFBP1. Part of a Cu(2+)-dependent multiprotein aggregate containing FGF1, S100A13 and SYT1. Interacts with SYT1. Interacts with S100A13. Interacts with LRRC59. Interacts with CSNKA, CSNKB and FIBP. While binding with LRRC59, CSNKA and FIBP seem mutually exclusive, CSNKB and FIBP may cooperatively interact with FGF1. Forms a ternary complex with FGFR1 and ITGAV:ITGB3 and induces the recruitment of PTPN11 to the complex. Post-translationally, in the nucleus, phosphorylated by PKC/PRKCD.

It is found in the secreted. The protein resides in the cytoplasm. It localises to the cell cortex. Its subcellular location is the cytosol. The protein localises to the nucleus. Plays an important role in the regulation of cell survival, cell division, angiogenesis, cell differentiation and cell migration. Functions as a potent mitogen in vitro. Acts as a ligand for FGFR1 and integrins. Binds to FGFR1 in the presence of heparin leading to FGFR1 dimerization and activation via sequential autophosphorylation on tyrosine residues which act as docking sites for interacting proteins, leading to the activation of several signaling cascades. Binds to integrin ITGAV:ITGB3. Its binding to integrin, subsequent ternary complex formation with integrin and FGFR1, and the recruitment of PTPN11 to the complex are essential for FGF1 signaling. Induces the phosphorylation and activation of FGFR1, FRS2, MAPK3/ERK1, MAPK1/ERK2 and AKT1. Can induce angiogenesis. In Mesocricetus auratus (Golden hamster), this protein is Fibroblast growth factor 1 (FGF1).